The primary structure comprises 185 residues: Crossover junction endodeoxyribonuclease RuvC (185 aa).

Catalysis depends on residues aspartate 7, glutamate 66, and aspartate 137. Mg(2+)-binding residues include aspartate 7, glutamate 66, and aspartate 137.

This sequence belongs to the RuvC family. In terms of assembly, homodimer which binds Holliday junction (HJ) DNA. The HJ becomes 2-fold symmetrical on binding to RuvC with unstacked arms; it has a different conformation from HJ DNA in complex with RuvA. In the full resolvosome a probable DNA-RuvA(4)-RuvB(12)-RuvC(2) complex forms which resolves the HJ. Mg(2+) is required as a cofactor.

The protein localises to the cytoplasm. It carries out the reaction Endonucleolytic cleavage at a junction such as a reciprocal single-stranded crossover between two homologous DNA duplexes (Holliday junction).. Functionally, the RuvA-RuvB-RuvC complex processes Holliday junction (HJ) DNA during genetic recombination and DNA repair. Endonuclease that resolves HJ intermediates. Cleaves cruciform DNA by making single-stranded nicks across the HJ at symmetrical positions within the homologous arms, yielding a 5'-phosphate and a 3'-hydroxyl group; requires a central core of homology in the junction. The consensus cleavage sequence is 5'-(A/T)TT(C/G)-3'. Cleavage occurs on the 3'-side of the TT dinucleotide at the point of strand exchange. HJ branch migration catalyzed by RuvA-RuvB allows RuvC to scan DNA until it finds its consensus sequence, where it cleaves and resolves the cruciform DNA. The protein is Crossover junction endodeoxyribonuclease RuvC of Anaeromyxobacter dehalogenans (strain 2CP-1 / ATCC BAA-258).